The primary structure comprises 245 residues: Carboxy-S-adenosyl-L-methionine synthase (245 aa).

S-adenosyl-L-methionine contacts are provided by residues Y42, 67–69, 92–93, 120–121, N135, and R202; these read GCS, DN, and DI.

It belongs to the class I-like SAM-binding methyltransferase superfamily. Cx-SAM synthase family. Homodimer.

The catalysed reaction is prephenate + S-adenosyl-L-methionine = carboxy-S-adenosyl-L-methionine + 3-phenylpyruvate + H2O. Functionally, catalyzes the conversion of S-adenosyl-L-methionine (SAM) to carboxy-S-adenosyl-L-methionine (Cx-SAM). In Vibrio parahaemolyticus serotype O3:K6 (strain RIMD 2210633), this protein is Carboxy-S-adenosyl-L-methionine synthase.